Here is a 122-residue protein sequence, read N- to C-terminus: UPF0102 protein VCM66_0538 (122 aa).

It belongs to the UPF0102 family.

In Vibrio cholerae serotype O1 (strain M66-2), this protein is UPF0102 protein VCM66_0538.